Consider the following 336-residue polypeptide: tRNA N6-adenosine threonylcarbamoyltransferase (336 aa).

Positions 114 and 118 each coordinate Fe cation. Substrate contacts are provided by residues 136-140 (LVSGG), D169, G182, D186, and N275. Position 302 (D302) interacts with Fe cation.

It belongs to the KAE1 / TsaD family. Fe(2+) is required as a cofactor.

Its subcellular location is the cytoplasm. The enzyme catalyses L-threonylcarbamoyladenylate + adenosine(37) in tRNA = N(6)-L-threonylcarbamoyladenosine(37) in tRNA + AMP + H(+). In terms of biological role, required for the formation of a threonylcarbamoyl group on adenosine at position 37 (t(6)A37) in tRNAs that read codons beginning with adenine. Is involved in the transfer of the threonylcarbamoyl moiety of threonylcarbamoyl-AMP (TC-AMP) to the N6 group of A37, together with TsaE and TsaB. TsaD likely plays a direct catalytic role in this reaction. The polypeptide is tRNA N6-adenosine threonylcarbamoyltransferase (Streptococcus agalactiae serotype III (strain NEM316)).